The following is a 487-amino-acid chain: L-asparagine permease 2 (487 aa).

12 helical membrane passes run 26-46 (QLQM…GAGG), 50-70 (SAGP…FLIL), 98-118 (VAFV…IVDT), 133-153 (PIPQ…MNLI), 163-183 (FWAS…GTVF), 214-234 (IVLV…VGIA), 256-276 (IACF…YTAY), 290-310 (IGID…ALSS), 341-361 (TGVP…GIIL), 369-389 (AFEI…ATIV), 414-434 (SPFS…LMYF), and 440-460 (PWMI…WYLV).

It belongs to the amino acid-polyamine-organocation (APC) superfamily. Amino acid transporter (AAT) (TC 2.A.3.1) family.

The protein localises to the cell membrane. Its function is as follows. Dual function in both nitrogen assimilation and in protection against acid stress during infection. Involved in asparagine uptake. The sequence is that of L-asparagine permease 2 (ansP2) from Mycobacterium bovis (strain ATCC BAA-935 / AF2122/97).